A 437-amino-acid chain; its full sequence is Epsilon-sarcoglycan (437 aa).

The Extracellular segment spans residues 1–317 (MLLFWWWELG…LKSRDYYTDF (317 aa)). Asparagine 200 carries an N-linked (GlcNAc...) asparagine glycan. A helical transmembrane segment spans residues 318-338 (LVTLAVPSAVALVLFLILAYI). The Cytoplasmic segment spans residues 339–437 (MCCRREGVEK…QPQTTGKWYP (99 aa)).

It belongs to the sarcoglycan alpha/epsilon family. Post-translationally, N-glycosylated. In terms of processing, ubiquitinated, leading to its degradation by the proteasome. Identified in all tissues tested. Expression highest in lung and placenta, moderate in brain, heart and skeletal muscle, low in kidney and liver. Also detected in embryo.

The protein localises to the cell membrane. It is found in the sarcolemma. It localises to the golgi apparatus. Its subcellular location is the cell projection. The protein resides in the dendrite. The protein localises to the cytoplasm. It is found in the cytoskeleton. Its function is as follows. Component of the sarcoglycan complex, a subcomplex of the dystrophin-glycoprotein complex which forms a link between the F-actin cytoskeleton and the extracellular matrix. The protein is Epsilon-sarcoglycan (Sgce) of Mus musculus (Mouse).